A 152-amino-acid polypeptide reads, in one-letter code: Arginine repressor (152 aa).

It belongs to the ArgR family.

Its subcellular location is the cytoplasm. Its pathway is amino-acid biosynthesis; L-arginine biosynthesis [regulation]. Regulates arginine biosynthesis genes. The sequence is that of Arginine repressor from Lactococcus lactis subsp. lactis (strain IL1403) (Streptococcus lactis).